We begin with the raw amino-acid sequence, 117 residues long: Alpha-endosulfine (117 aa).

The interval 1–53 (MAAPLGTGARAEDSGQEKQDSQEKETVIPERAEEAKLKAKYPNLGQKPGGSDF) is disordered. Over residues 10–37 (RAEDSGQEKQDSQEKETVIPERAEEAKL) the composition is skewed to basic and acidic residues. Position 67 is a phosphoserine; by GWL (S67). Positions 76-117 (KMKNKQLPTAGPDKNLVTGDHIPKPQDLPQRKSSLVASKLAG) are disordered.

Belongs to the endosulfine family. Post-translationally, phosphorylation at Ser-67 by GWL during mitosis is essential for interaction with PPP2R2D (PR55-delta) and subsequent inactivation of PP2A.

The protein localises to the cytoplasm. Protein phosphatase inhibitor that specifically inhibits protein phosphatase 2A (PP2A) during mitosis. When phosphorylated at Ser-67 during mitosis, specifically interacts with PPP2R2D (PR55-delta) and inhibits its activity, leading to inactivation of PP2A, an essential condition to keep cyclin-B1-CDK1 activity high during M phase. The polypeptide is Alpha-endosulfine (ENSA) (Gallus gallus (Chicken)).